Here is a 269-residue protein sequence, read N- to C-terminus: Type II methyltransferase M2.LlaDCHI (269 aa).

This sequence belongs to the N(4)/N(6)-methyltransferase family.

It catalyses the reaction a 2'-deoxyadenosine in DNA + S-adenosyl-L-methionine = an N(6)-methyl-2'-deoxyadenosine in DNA + S-adenosyl-L-homocysteine + H(+). Functionally, a beta subtype methylase, recognizes the double-stranded sequence 5'-GATC-3', methylates A-2 on both strands, and protects the DNA from cleavage by the LlaDCHI endonuclease. In Lactococcus lactis subsp. cremoris (Streptococcus cremoris), this protein is Type II methyltransferase M2.LlaDCHI.